The sequence spans 428 residues: Enolase (428 aa).

Gln162 is a (2R)-2-phosphoglycerate binding site. Residue Glu204 is the Proton donor of the active site. Residues Asp241, Glu283, and Asp310 each coordinate Mg(2+). (2R)-2-phosphoglycerate contacts are provided by Lys335, Arg364, Ser365, and Lys386. Lys335 serves as the catalytic Proton acceptor.

It belongs to the enolase family. Requires Mg(2+) as cofactor.

It is found in the cytoplasm. The protein localises to the secreted. It localises to the cell surface. The enzyme catalyses (2R)-2-phosphoglycerate = phosphoenolpyruvate + H2O. Its pathway is carbohydrate degradation; glycolysis; pyruvate from D-glyceraldehyde 3-phosphate: step 4/5. Catalyzes the reversible conversion of 2-phosphoglycerate (2-PG) into phosphoenolpyruvate (PEP). It is essential for the degradation of carbohydrates via glycolysis. This chain is Enolase, found in Rhodococcus jostii (strain RHA1).